Here is a 608-residue protein sequence, read N- to C-terminus: Glutamine--fructose-6-phosphate aminotransferase [isomerizing] (608 aa).

The active-site Nucleophile; for GATase activity is C2. The region spanning 2–217 (CGIVGYSGKK…DKEFVVLTSE (216 aa)) is the Glutamine amidotransferase type-2 domain. SIS domains lie at 285–424 (TKEQ…NKNT) and 453–598 (KVQK…VDKP). The For Fru-6P isomerization activity role is filled by K603.

Homodimer.

It is found in the cytoplasm. It carries out the reaction D-fructose 6-phosphate + L-glutamine = D-glucosamine 6-phosphate + L-glutamate. Its function is as follows. Catalyzes the first step in hexosamine metabolism, converting fructose-6P into glucosamine-6P using glutamine as a nitrogen source. This Clostridium acetobutylicum (strain ATCC 824 / DSM 792 / JCM 1419 / IAM 19013 / LMG 5710 / NBRC 13948 / NRRL B-527 / VKM B-1787 / 2291 / W) protein is Glutamine--fructose-6-phosphate aminotransferase [isomerizing].